We begin with the raw amino-acid sequence, 100 residues long: Small ribosomal subunit protein uS14c (100 aa).

The protein belongs to the universal ribosomal protein uS14 family. In terms of assembly, part of the 30S ribosomal subunit.

Its subcellular location is the plastid. It is found in the chloroplast. Binds 16S rRNA, required for the assembly of 30S particles. The protein is Small ribosomal subunit protein uS14c of Helianthus annuus (Common sunflower).